The sequence spans 318 residues: MLFLNIIKLLLGLFIMNEVKAQNFYDSDPHISELTPKSFDKAIHNTNYTSLVEFYAPWCGHCKKLSSTFRKAAKRLDGVVQVAAVNCDLNKNKALCAKYDVNGFPTLMVFRPPKIDLSKPIDNAKKSFSAHANEVYSGARTLAPIVDFSLSRIRSYVKKFVRIDTLGSLLRKSPKLSVVLFSKQDKISPVYKSIALDWLGKFDFYSISNKKLKQLTDMNPTYEKTPEIFKYLQKVIPEQRQSDKSKLVVFDADKDKFWEYEGNSINKNDISKFLRDTFSITPNEGPFSRRSEYIAYLKTGKKPIKKNHSSSGNKHDEL.

An N-terminal signal peptide occupies residues 1 to 21; the sequence is MLFLNIIKLLLGLFIMNEVKA. The Thioredoxin domain maps to 22-158; sequence QNFYDSDPHI…SLSRIRSYVK (137 aa). N-linked (GlcNAc...) asparagine glycosylation is present at N47. A disulfide bond links C59 and C62. N307 carries an N-linked (GlcNAc...) asparagine glycan. The Prevents secretion from ER signature appears at 315–318; the sequence is HDEL.

The protein belongs to the protein disulfide isomerase family. In terms of assembly, interacts with CNE1 and EPS1.

The protein resides in the endoplasmic reticulum lumen. It carries out the reaction Catalyzes the rearrangement of -S-S- bonds in proteins.. Its function is as follows. Participates in the folding of proteins containing disulfide bonds. The polypeptide is Protein disulfide-isomerase MPD1 (MPD1) (Saccharomyces cerevisiae (strain ATCC 204508 / S288c) (Baker's yeast)).